The sequence spans 710 residues: Probable thimet oligopeptidase (710 aa).

H502 provides a ligand contact to Zn(2+). E503 is a catalytic residue. H506 provides a ligand contact to Zn(2+).

The protein belongs to the peptidase M3 family. It depends on Zn(2+) as a cofactor.

The protein localises to the cytoplasm. The enzyme catalyses Preferential cleavage of bonds with hydrophobic residues at P1, P2 and P3' and a small residue at P1' in substrates of 5 to 15 residues.. Involved in cytoplasmic peptide degradation. The protein is Probable thimet oligopeptidase of Arabidopsis thaliana (Mouse-ear cress).